We begin with the raw amino-acid sequence, 406 residues long: Zinc metalloprotease Rip1 (406 aa).

Residues 1–21 (MMFGIGIVLFALAILVSVALH) form a helical membrane-spanning segment. Zn(2+) is bound at residue His-21. The active site involves Glu-22. His-25 serves as a coordination point for Zn(2+). A helical membrane pass occupies residues 108-128 (PAMNFVIGLVLIYGIAIVWGL). The PDZ domain maps to 125–209 (VWGLPNLHQP…RIEFKRDGRV (85 aa)). Asp-206 is a Zn(2+) binding site. The next 2 membrane-spanning stretches (helical) occupy residues 327 to 349 (NFVL…IAVA) and 375 to 395 (LMPA…LTVT).

It belongs to the peptidase M50B family. It depends on Zn(2+) as a cofactor.

The protein resides in the cell membrane. Proteolysis is inhibited by Wag31; when Wag31 is non-functional oxidative stress increases proteolysis. A probable intramembrane site-2 protease (S2P) that cleaves type-2 transmembrane proteins within their membrane-spanning domains. Degrades PbpB (PBP3, FtsI) under conditions of oxidatives stress; degradation is inhibited by Wag31-PbpB interaction. Also cleaves anti-sigma factors RskA, RslA and RslM. Site-1 proteases have not yet been identified in this organism. In terms of biological role, regulated intramembrane proteolysis (RIP) occurs when an extracytoplasmic signal (possibly oxidative stress) triggers a concerted proteolytic cascade to transmit information and elicit cellular responses. The membrane-spanning regulatory substrate protein (includes anti-sigma factors RskA, RslA, RsmA, and PbpB) is first cut extracytoplasmically (site-1 protease, S1P), then within the membrane itself (site-2 protease, S2P, this entry), while cytoplasmic proteases finish degrading the regulatory protein, liberating the effector protein (ECF sigma factors SigK, SigL and SigM). In Mycolicibacterium smegmatis (strain ATCC 700084 / mc(2)155) (Mycobacterium smegmatis), this protein is Zinc metalloprotease Rip1 (rip1).